Reading from the N-terminus, the 1427-residue chain is MASWGGEKRGGAEGSPKPAVYATRKTPSVGSQGDQWYLGYPGDQWSSGFPYSWWKNSVGSESKHGEGALDQPQHDVRLEDLGELHRAARSGDVPGVEHILAPGDTGVDKRDRKKSIQQLVPEYKEKQTPESLPQNNNPDWHPTNLTLSDETCQRSKNLKVDDKCPSVSPSMPENQSATKELGQMNLTEREKMDTGVVLLSGNDTLHDLCQSQLPENKESKEAEQDSELTSEEEQERLKGCENKQPQKTSQEPEMAKDCDREDIPIYPVLPHVQKSEEMWIEQGKLEWKNQLKLVINELKQRFGEIYEKYKIPACPEEEPLLDNSTRGTDVKDIPFNLTNNIPGCEEEDASEISVSVVFETFPEQKEPSLKNIIHPYYHPYSGSQEHVCQSSSKFHLHENKLDCDNDNKPGIGHIFSTDKNFHNDASTKKARNPEVVMVEMKEDQEFDLQMTKNMNQNSDSGSTNNYKSLKPKLENLSSLPPDSDRTSEVYLHEELQQDMQKFKNEVNTLEEEFLALKKEDVQLHKDVEEEMEKHRSNSTELSGTLTDGTTVGNDDDGLNQQIPRKENGEHDRPADKTSNEKNEVKNQIYPEADFADSMEPSEIASEDCELSHSVYENFMLLIEQLRMEYKDSASLPRIQDTFCLCEHLLKLKNNHCDQLTVKLKQMENMVSVLQNELSETKKTKLQLELQKIEWEKELYDLRLALKQENEEKRNADMLYNKDSEQLRIKEEECGKVVETKQQLKWNLRRLVKELRTVRNNLDLVVQERNDAQKQLSEEQDARILQDQILTSKQKELEMARKKMNSEISHRHQKEKDLFHEDCMLQEEIALLRLEIDTIKNQNKQKEKKYFEDIEAVKEKNDNLQKIIKLNEETLTETILQYSGQLNNLTAENKILNSELENGKQNQERLEIEMESYRCRLAAAVRDCDQSQTARDLKLDFQRTRQEWVRLHDKMKVDMSGLQAKNEILSEKLSNAESKINSLQIQLHNTRDALGRESLILERVQRDLSQTQCQKKETEQMYQIEQSKLKKYIAKQESVEERLSQLQSENMLLRQQLDDAHKKANSQEKTSSTIQDQFHSAAKNLQAESEKQILSLQEKNKELMDEYNHLKERMDQCEKEKAGRKIDLTEAQETVPSRCLHLDAENEVLQLQQTLFSMKAIQKQCETLQKNKKQLKQEVVNLKSYMERNMLERGKAEWHKLLIEERARKEIEEKLNEAILTLQKQAAVSHEQLVQLREDNTTSIKTQMELTIKDLESEISRIKTSQADFNKTELERYKELYLEEVKVRESLSNELSRTNEMIAEVSTQLTVEKEQTRSRSLFTAYATRPVLESPCVGNLNDSEGLNRKHIPRKKRSALKDMESYLLKMQQKLQNDLTAEVAGSSQTGLHRIPQCSSFSSSSLHLLLCSICQPFFLILQLLLNMNLDPI.

Positions 1–11 are enriched in basic and acidic residues; the sequence is MASWGGEKRGG. Disordered regions lie at residues 1–32, 87–189, 213–261, 453–485, and 528–586; these read MASW…VGSQ, AARS…LTER, LPEN…CDRE, NMNQ…DSDR, and EEEM…EVKN. Polar residues-rich tracts occupy residues 129 to 150 and 167 to 178; these read PESL…LSDE and VSPSMPENQSAT. Residues 224-234 are compositionally biased toward acidic residues; it reads QDSELTSEEEQ. Residues 453 to 467 are compositionally biased toward polar residues; the sequence is NMNQNSDSGSTNNYK. The stretch at 490-545 forms a coiled coil; the sequence is YLHEELQQDMQKFKNEVNTLEEEFLALKKEDVQLHKDVEEEMEKHRSNSTELSGTL. Residues 528-537 show a composition bias toward basic and acidic residues; that stretch reads EEEMEKHRSN. The segment covering 543-552 has biased composition (low complexity); that stretch reads GTLTDGTTVG. The segment covering 563-584 has biased composition (basic and acidic residues); that stretch reads PRKENGEHDRPADKTSNEKNEV. 2 coiled-coil regions span residues 648-1129 and 1155-1309; these read LLKL…DLTE and FSMK…TQLT.

Belongs to the CCDC144 family.

In terms of biological role, may play a role in preventing the formation of kidney stones through inhibition of calcium oxalate monohydrate (COM) crystallization, attenuating COM-induced apoptotic injury to renal epithelial cells. May exhibit antilithiatic (preventing the formation of kidney stones) activity through crystal binding, hindering the crystal attachment to renal epithelial cells, a pre-requisite to initiate inflammatory response. The polypeptide is Coiled-coil domain-containing protein 144A (CCDC144A) (Homo sapiens (Human)).